We begin with the raw amino-acid sequence, 299 residues long: Beta-lactamase VEB-1 (299 aa).

An N-terminal signal peptide occupies residues 1–23; sequence MKIVKRILLVLLSLFFTIVYSNA. Serine 68 functions as the Nucleophile; acyl-ester intermediate in the catalytic mechanism. 3 residues coordinate a beta-lactam: lysine 71, serine 131, and glutamate 167. The Proton acceptor role is filled by glutamate 167.

It belongs to the class-A beta-lactamase family.

It catalyses the reaction a beta-lactam + H2O = a substituted beta-amino acid. Its activity is regulated as follows. Inhibited by the beta-lactamase-blocking agent clavulanic acid. Functionally, class A beta-lactamase which confers resistance to the beta-lactam antibiotics, including penicillins and cephalosporins, in E.coli strain JM109. Acts via hydrolysis of the beta-lactam ring. Has penicillin-, and cephalosporin-hydrolyzing activities. The chain is Beta-lactamase VEB-1 from Pseudomonas aeruginosa.